Reading from the N-terminus, the 241-residue chain is uncharacterized protein (241 aa).

Residues 147–212 enclose the HTH luxR-type domain; it reads FSYRSVILTL…EMYAWINSAQ (66 aa).

This is an uncharacterized protein from Escherichia coli O157:H7.